Reading from the N-terminus, the 461-residue chain is MDYSYDEDLDELCPVCGDKVSGYHYGLLTCESCKGFFKRTVQNNKHYTCTESQSCKIDKTQRKRCPFCRFQKCLTVGMRLEAVRADRMRGGRNKFGPMYKRDRALKQQKKAQIRANGFKLETGPPMGVPPPPPPAPDYVLPPSLHGPEPKGLAAGPPAGPLGDFGAPALPMAVPGAHGPLAGYLYPAFPGRAIKSEYPEPYASPPQPGLPYGYPEPFSGGPNVPELILQLLQLEPDEDQVRARILGCLQEPTKSRPDQPAAFGLLCRMADQTFISIVDWARRCMVFKELEVADQMTLLQNCWSELLVFDHIYRQVQHGKEGSILLVTGQEVELTTVATQAGSLLHSLVLRAQELVLQLLALQLDRQEFVCLKFIILFSLDLKFLNNHILVKDAQEKANAALLDYTLCHYPHCGDKFQQLLLCLVEVRALSMQAKEYLYHKHLGNEMPRNNLLIEMLQAKQT.

The nuclear receptor DNA-binding region spans 10–85 (DELCPVCGDK…VGMRLEAVRA (76 aa)). The NR C4-type zinc finger occupies 13–33 (CPVCGDKVSGYHYGLLTCESC). N6-acetyllysine is present on residues K34, K38, and K72. Residues 49–73 (CTESQSCKIDKTQRKRCPFCRFQKC) form an NR C4-type zinc finger. K119 is covalently cross-linked (Glycyl lysine isopeptide (Lys-Gly) (interchain with G-Cter in SUMO)). The interval 119-157 (KLETGPPMGVPPPPPPAPDYVLPPSLHGPEPKGLAAGPP) is disordered. Pro residues predominate over residues 126 to 136 (MGVPPPPPPAP). K194 is covalently cross-linked (Glycyl lysine isopeptide (Lys-Gly) (interchain with G-Cter in SUMO)). S203 is modified (phosphoserine; by CDK7). Positions 222-459 (NVPELILQLL…NLLIEMLQAK (238 aa)) constitute an NR LBD domain. The segment at 230 to 461 (LLQLEPDEDQ…LIEMLQAKQT (232 aa)) is important for dimerization. A 1,2-diacyl-sn-glycero-3-phosphocholine contacts are provided by G341, Y436, and K440. G341, Y436, and K440 together coordinate a 1,2-diacylglycero-3-phosphoethanolamine.

The protein belongs to the nuclear hormone receptor family. NR5 subfamily. As to quaternary structure, binds DNA as a monomer. Interacts with NR0B2 and PPARGC1A. Part of a complex consisting of SFPQ, NONO and NR5A1. Interacts with NCOA2. Interacts with DGKQ and CDK7. Binds to and activated by HIPK3. Acetylation stimulates the transcriptional activity. Post-translationally, sumoylation reduces CDK7-mediated phosphorylation on Ser-203. In terms of processing, phosphorylated on Ser-203 by CDK7. This phosphorylation promotes transcriptional activity. High expressed in the adrenal cortex, the ovary, the testis, and the spleen.

It localises to the nucleus. Its function is as follows. Transcriptional activator. Essential for sexual differentiation and formation of the primary steroidogenic tissues. Binds to the Ad4 site found in the promoter region of steroidogenic P450 genes such as CYP11A, CYP11B and CYP21B. Also regulates the AMH/Muellerian inhibiting substance gene as well as the AHCH and STAR genes. 5'-YCAAGGYC-3' and 5'-RRAGGTCA-3' are the consensus sequences for the recognition by NR5A1. The SFPQ-NONO-NR5A1 complex binds to the CYP17 promoter and regulates basal and cAMP-dependent transcriptional activity. Binds phosphatidylcholine. Binds phospholipids with a phosphatidylinositol (PI) headgroup, in particular PI(3,4)P2 and PI(3,4,5)P3. Activated by the phosphorylation of NR5A1 by HIPK3 leading to increased steroidogenic gene expression upon cAMP signaling pathway stimulation. The chain is Steroidogenic factor 1 (NR5A1) from Homo sapiens (Human).